The sequence spans 389 residues: Phospho-N-acetylmuramoyl-pentapeptide-transferase (389 aa).

A run of 10 helical transmembrane segments spans residues 25-45 (RAVM…PWVI), 73-93 (TMGG…WGDL), 97-117 (FIWI…VDDY), 135-155 (FWQS…VSEA), 190-210 (ISYP…IVGA), 222-242 (GLVI…AYVM), 258-278 (GAGE…AFLW), 286-306 (VFMG…VAVI), 311-331 (IVLF…MLQV), and 366-386 (QVVV…LSTL).

This sequence belongs to the glycosyltransferase 4 family. MraY subfamily. Mg(2+) serves as cofactor.

Its subcellular location is the cell inner membrane. It catalyses the reaction UDP-N-acetyl-alpha-D-muramoyl-L-alanyl-gamma-D-glutamyl-meso-2,6-diaminopimeloyl-D-alanyl-D-alanine + di-trans,octa-cis-undecaprenyl phosphate = di-trans,octa-cis-undecaprenyl diphospho-N-acetyl-alpha-D-muramoyl-L-alanyl-D-glutamyl-meso-2,6-diaminopimeloyl-D-alanyl-D-alanine + UMP. It functions in the pathway cell wall biogenesis; peptidoglycan biosynthesis. Its function is as follows. Catalyzes the initial step of the lipid cycle reactions in the biosynthesis of the cell wall peptidoglycan: transfers peptidoglycan precursor phospho-MurNAc-pentapeptide from UDP-MurNAc-pentapeptide onto the lipid carrier undecaprenyl phosphate, yielding undecaprenyl-pyrophosphoryl-MurNAc-pentapeptide, known as lipid I. This is Phospho-N-acetylmuramoyl-pentapeptide-transferase from Burkholderia multivorans (strain ATCC 17616 / 249).